The chain runs to 276 residues: NH(3)-dependent NAD(+) synthetase (276 aa).

43–50 (GISGGVDS) contributes to the ATP binding site. A Mg(2+)-binding site is contributed by Asp49. Residue Arg146 coordinates deamido-NAD(+). Thr166 provides a ligand contact to ATP. A Mg(2+)-binding site is contributed by Glu171. Residues Lys179 and Asp186 each contribute to the deamido-NAD(+) site. ATP-binding residues include Lys195 and Thr217. 266-267 (HK) provides a ligand contact to deamido-NAD(+).

It belongs to the NAD synthetase family. Homodimer.

It catalyses the reaction deamido-NAD(+) + NH4(+) + ATP = AMP + diphosphate + NAD(+) + H(+). It functions in the pathway cofactor biosynthesis; NAD(+) biosynthesis; NAD(+) from deamido-NAD(+) (ammonia route): step 1/1. In terms of biological role, catalyzes the ATP-dependent amidation of deamido-NAD to form NAD. Uses ammonia as a nitrogen source. This is NH(3)-dependent NAD(+) synthetase from Vibrio parahaemolyticus serotype O3:K6 (strain RIMD 2210633).